A 282-amino-acid polypeptide reads, in one-letter code: Phosphate import ATP-binding protein PstB (282 aa).

The span at 1-10 shows a compositional bias: basic and acidic residues; that stretch reads MNMAESHLDP. The tract at residues 1 to 24 is disordered; it reads MNMAESHLDPSKLATGPAGAGAAT. Low complexity predominate over residues 14–24; sequence ATGPAGAGAAT. The ABC transporter domain maps to 36 to 277; that stretch reads IEVKNLNFFY…PARKETEDYI (242 aa). 68–75 is an ATP binding site; it reads GPSGCGKS.

Belongs to the ABC transporter superfamily. Phosphate importer (TC 3.A.1.7) family. The complex is composed of two ATP-binding proteins (PstB), two transmembrane proteins (PstC and PstA) and a solute-binding protein (PstS).

The protein resides in the cell inner membrane. It catalyses the reaction phosphate(out) + ATP + H2O = ADP + 2 phosphate(in) + H(+). Its function is as follows. Part of the ABC transporter complex PstSACB involved in phosphate import. Responsible for energy coupling to the transport system. This Burkholderia thailandensis (strain ATCC 700388 / DSM 13276 / CCUG 48851 / CIP 106301 / E264) protein is Phosphate import ATP-binding protein PstB.